Reading from the N-terminus, the 130-residue chain is Leptin receptor gene-related protein (130 aa).

A run of 4 helical transmembrane segments spans residues 7-27 (LVALSFSGALGLTFLLLGCAL), 32-52 (QYWPMFVLIFYILSPIPNLIA), 68-88 (LAYFLTTGIVVSAYGLPVVLA), and 99-119 (GLVMAGNCVIFLTILGFFLIF).

This sequence belongs to the OB-RGRP/VPS55 family.

The protein localises to the golgi apparatus membrane. It localises to the endosome membrane. Functionally, involved in protein trafficking. May be involved in the down-regulation of membrane protein levels. This is Leptin receptor gene-related protein (leprot) from Danio rerio (Zebrafish).